We begin with the raw amino-acid sequence, 251 residues long: Ubiquinone/menaquinone biosynthesis C-methyltransferase UbiE (251 aa).

S-adenosyl-L-methionine contacts are provided by residues T74, D95, and 123-124; that span reads NA.

This sequence belongs to the class I-like SAM-binding methyltransferase superfamily. MenG/UbiE family.

It catalyses the reaction a 2-demethylmenaquinol + S-adenosyl-L-methionine = a menaquinol + S-adenosyl-L-homocysteine + H(+). It carries out the reaction a 2-methoxy-6-(all-trans-polyprenyl)benzene-1,4-diol + S-adenosyl-L-methionine = a 5-methoxy-2-methyl-3-(all-trans-polyprenyl)benzene-1,4-diol + S-adenosyl-L-homocysteine + H(+). Its pathway is quinol/quinone metabolism; menaquinone biosynthesis; menaquinol from 1,4-dihydroxy-2-naphthoate: step 2/2. It participates in cofactor biosynthesis; ubiquinone biosynthesis. In terms of biological role, methyltransferase required for the conversion of demethylmenaquinol (DMKH2) to menaquinol (MKH2) and the conversion of 2-polyprenyl-6-methoxy-1,4-benzoquinol (DDMQH2) to 2-polyprenyl-3-methyl-6-methoxy-1,4-benzoquinol (DMQH2). The polypeptide is Ubiquinone/menaquinone biosynthesis C-methyltransferase UbiE (Psychromonas ingrahamii (strain DSM 17664 / CCUG 51855 / 37)).